A 136-amino-acid chain; its full sequence is D-ribose pyranase (136 aa).

Residue histidine 20 is the Proton donor of the active site. Residues aspartate 28, histidine 98, and tyrosine 120–asparagine 122 contribute to the substrate site.

This sequence belongs to the RbsD / FucU family. RbsD subfamily. In terms of assembly, homodecamer.

Its subcellular location is the cytoplasm. The enzyme catalyses beta-D-ribopyranose = beta-D-ribofuranose. It participates in carbohydrate metabolism; D-ribose degradation; D-ribose 5-phosphate from beta-D-ribopyranose: step 1/2. Its function is as follows. Catalyzes the interconversion of beta-pyran and beta-furan forms of D-ribose. The chain is D-ribose pyranase from Geobacillus kaustophilus (strain HTA426).